A 245-amino-acid polypeptide reads, in one-letter code: MSGGVIRGPAGNNDCRIYVGNLPPDIRTKDVEDVFYKYGAIRDIDLKNRRGGPPFAFVEFEDPRDAEDAVYGRDGYDYDGYRLRVEFPRSGRGGGRGGGGGGGVGAPRGRYGPPSRRSEYRVIVSGLPPSGSWQDLKDHMREAGDVCYADVFRDGTGVVEFVRKEDMTYAVRKLDNTKFRSHEGETAYIRVKVDGPRSPSYGRSRSRSRSRSRSRSNSRSRSYSPRRSRGSPRYSPRHSRSRSRT.

The 76-residue stretch at 15–90 (CRIYVGNLPP…YRLRVEFPRS (76 aa)) folds into the RRM 1 domain. Disordered stretches follow at residues 89–116 (RSGR…PPSR) and 192–245 (KVDG…RSRT). The span at 91 to 106 (GRGGGRGGGGGGGVGA) shows a compositional bias: gly residues. An RRM 2 domain is found at 120–194 (YRVIVSGLPP…ETAYIRVKVD (75 aa)). The span at 204 to 245 (SRSRSRSRSRSRSNSRSRSYSPRRSRGSPRYSPRHSRSRSRT) shows a compositional bias: basic residues.

The protein belongs to the splicing factor SR family.

It is found in the cytoplasm. The protein resides in the nucleus speckle. In terms of biological role, may play a role in preventing exon skipping, ensuring the accuracy of splicing and regulating alternative splicing. The chain is Serine/arginine-rich splicing factor 1B (srsf1b) from Danio rerio (Zebrafish).